Reading from the N-terminus, the 375-residue chain is MTTEKINLLDFDRKGMRQFFAEELGEKAFRADQVMKWIYHFGVDDFDNMTNINKKLREKLQHKCEIKAPTVAEAQHSSDGTIKWAMKVGDQDVETVYIPEEDRATLCVSSQVGCALECKFCSTAQQGFNRNLKVSEIIGQVWRAAREIGLQKETGRRPITNVVMMGMGEPLLNMKNLIPALEIMLDDLGFGLSKRRVTVSTSGVVSGLDQMTGKIDVALAISLHAPNDKLRSEIMPINDRWDIQDFLASVRRYIASSNANRGKVTVEYVLLDHVNDDMGHARELAELMKDTPCKINLIPFNPYPGSPYKKPSNSRIDRFQKTLMQYEHTVTVRKTRGDDIDAACGQLVGDVIDRTKRTAALKAARGAETIDVKAV.

The active-site Proton acceptor is glutamate 94. The 240-residue stretch at 100-339 (EEDRATLCVS…VTVRKTRGDD (240 aa)) folds into the Radical SAM core domain. The cysteines at positions 107 and 344 are disulfide-linked. 3 residues coordinate [4Fe-4S] cluster: cysteine 114, cysteine 118, and cysteine 121. Residues 168–169 (GE), serine 200, 222–224 (SLH), and asparagine 301 contribute to the S-adenosyl-L-methionine site. The S-methylcysteine intermediate role is filled by cysteine 344.

It belongs to the radical SAM superfamily. RlmN family. [4Fe-4S] cluster serves as cofactor.

The protein resides in the cytoplasm. It catalyses the reaction adenosine(2503) in 23S rRNA + 2 reduced [2Fe-2S]-[ferredoxin] + 2 S-adenosyl-L-methionine = 2-methyladenosine(2503) in 23S rRNA + 5'-deoxyadenosine + L-methionine + 2 oxidized [2Fe-2S]-[ferredoxin] + S-adenosyl-L-homocysteine. The catalysed reaction is adenosine(37) in tRNA + 2 reduced [2Fe-2S]-[ferredoxin] + 2 S-adenosyl-L-methionine = 2-methyladenosine(37) in tRNA + 5'-deoxyadenosine + L-methionine + 2 oxidized [2Fe-2S]-[ferredoxin] + S-adenosyl-L-homocysteine. Its function is as follows. Specifically methylates position 2 of adenine 2503 in 23S rRNA and position 2 of adenine 37 in tRNAs. m2A2503 modification seems to play a crucial role in the proofreading step occurring at the peptidyl transferase center and thus would serve to optimize ribosomal fidelity. This chain is Dual-specificity RNA methyltransferase RlmN, found in Vibrio parahaemolyticus serotype O3:K6 (strain RIMD 2210633).